The chain runs to 119 residues: Ribonuclease P protein component (119 aa).

It belongs to the RnpA family. As to quaternary structure, consists of a catalytic RNA component (M1 or rnpB) and a protein subunit.

The enzyme catalyses Endonucleolytic cleavage of RNA, removing 5'-extranucleotides from tRNA precursor.. Functionally, RNaseP catalyzes the removal of the 5'-leader sequence from pre-tRNA to produce the mature 5'-terminus. It can also cleave other RNA substrates such as 4.5S RNA. The protein component plays an auxiliary but essential role in vivo by binding to the 5'-leader sequence and broadening the substrate specificity of the ribozyme. This chain is Ribonuclease P protein component, found in Listeria monocytogenes serotype 4b (strain CLIP80459).